Reading from the N-terminus, the 248-residue chain is Acetylglutamate kinase (248 aa).

Substrate is bound by residues 41-42 (GG), Arg-63, and Asn-155.

It belongs to the acetylglutamate kinase family. ArgB subfamily.

The protein localises to the cytoplasm. It carries out the reaction N-acetyl-L-glutamate + ATP = N-acetyl-L-glutamyl 5-phosphate + ADP. Its pathway is amino-acid biosynthesis; L-arginine biosynthesis; N(2)-acetyl-L-ornithine from L-glutamate: step 2/4. In terms of biological role, catalyzes the ATP-dependent phosphorylation of N-acetyl-L-glutamate. This chain is Acetylglutamate kinase, found in Lactiplantibacillus plantarum (strain ATCC BAA-793 / NCIMB 8826 / WCFS1) (Lactobacillus plantarum).